The following is a 308-amino-acid chain: Probable manganese-dependent inorganic pyrophosphatase (308 aa).

Residues His9, Asp13, Asp15, Asp74, His96, and Asp148 each contribute to the Mn(2+) site.

It belongs to the PPase class C family. Mn(2+) is required as a cofactor.

It localises to the cytoplasm. It carries out the reaction diphosphate + H2O = 2 phosphate + H(+). This chain is Probable manganese-dependent inorganic pyrophosphatase, found in Oceanobacillus iheyensis (strain DSM 14371 / CIP 107618 / JCM 11309 / KCTC 3954 / HTE831).